Consider the following 620-residue polypeptide: Cell fusion protein cfr1 (620 aa).

Positions 79 to 169 (LPSPPVLKLK…KHITIKTLRM (91 aa)) constitute a Fibronectin type-III domain. A BRCT domain is found at 167–256 (LRMIDLTGIQ…RLVNVSGFYI (90 aa)). 2 disordered regions span residues 287–566 (QPKN…PEKA) and 588–620 (KQSS…VNID). Residues 303–314 (APQQTTQQGTQN) show a composition bias toward polar residues. Positions 315-330 (SANAEPSSSASVPAEA) are enriched in low complexity. Residues 352–375 (SKPNEAPTSSENIKADQPENSTKQ) are compositionally biased toward polar residues. Basic and acidic residues predominate over residues 382–392 (MQIKDAEEHSN). The span at 393–406 (LESTPAAQQTSEVE) shows a compositional bias: polar residues. Residues 424-434 (NVNEENNTPET) are compositionally biased toward low complexity. Polar residues predominate over residues 445–468 (NTAAESLINQEETTSGEAVTKSTV). Acidic residues predominate over residues 472–484 (ANEEEAEPNEIIE). Over residues 506-515 (NNANSENANG) the composition is skewed to polar residues. A compositionally biased stretch (basic and acidic residues) spans 517 to 537 (TDEKIIEAPLDTKENSDDDKP).

The protein belongs to the CHS5 family.

The protein resides in the golgi apparatus. In terms of biological role, required for cell fusion, independently of fus1. Appears to have a role in transporting proteins that are involved in mating. May act as a scaffold to retain cell fusion proteins in the cisternae of the Golgi. Degraded at the onset of mating and this leads to release of cell fusion proteins. This is Cell fusion protein cfr1 (cfr1) from Schizosaccharomyces pombe (strain 972 / ATCC 24843) (Fission yeast).